Here is a 427-residue protein sequence, read N- to C-terminus: V-type proton ATPase subunit C 2 (427 aa).

Residues histidine 292–glutamate 319 are disordered.

This sequence belongs to the V-ATPase C subunit family. In terms of assembly, V-ATPase is a heteromultimeric enzyme made up of two complexes: the ATP-hydrolytic V1 complex and the proton translocation V0 complex. The V1 complex consists of three catalytic AB heterodimers that form a heterohexamer, three peripheral stalks each consisting of EG heterodimers, one central rotor including subunits D and F, and the regulatory subunits C and H. The proton translocation complex V0 consists of the proton transport subunit a, a ring of proteolipid subunits c9c'', rotary subunit d, subunits e and f, and the accessory subunits ATP6AP1/Ac45 and ATP6AP2/PRR. Kidney and placenta.

In terms of biological role, subunit of the V1 complex of vacuolar(H+)-ATPase (V-ATPase), a multisubunit enzyme composed of a peripheral complex (V1) that hydrolyzes ATP and a membrane integral complex (V0) that translocates protons. V-ATPase is responsible for acidifying and maintaining the pH of intracellular compartments and in some cell types, is targeted to the plasma membrane, where it is responsible for acidifying the extracellular environment. Subunit C is necessary for the assembly of the catalytic sector of the enzyme and is likely to have a specific function in its catalytic activity. The polypeptide is V-type proton ATPase subunit C 2 (ATP6V1C2) (Homo sapiens (Human)).